The primary structure comprises 176 residues: Ribosome maturation factor RimM (176 aa).

Residues 96 to 176 (PEDEFYWRDL…QILVDWDPDF (81 aa)) form the PRC barrel domain.

It belongs to the RimM family. In terms of assembly, binds ribosomal protein uS19.

Its subcellular location is the cytoplasm. In terms of biological role, an accessory protein needed during the final step in the assembly of 30S ribosomal subunit, possibly for assembly of the head region. Essential for efficient processing of 16S rRNA. May be needed both before and after RbfA during the maturation of 16S rRNA. It has affinity for free ribosomal 30S subunits but not for 70S ribosomes. The polypeptide is Ribosome maturation factor RimM (Shewanella piezotolerans (strain WP3 / JCM 13877)).